The sequence spans 419 residues: S-adenosylmethionine synthase (419 aa).

ATP is bound at residue His-15. A Mg(2+)-binding site is contributed by Asp-17. Glu-43 contributes to the K(+) binding site. L-methionine-binding residues include Glu-56 and Gln-99. The tract at residues 99 to 109 is flexible loop; sequence QSPEIAQGVSC. Residues 173-175, 253-254, Asp-262, 268-269, Ala-285, and Lys-289 contribute to the ATP site; these read DGK, RF, and RK. Position 262 (Asp-262) interacts with L-methionine. Lys-293 is a binding site for L-methionine.

It belongs to the AdoMet synthase family. As to quaternary structure, homotetramer; dimer of dimers. Requires Mg(2+) as cofactor. K(+) is required as a cofactor.

It localises to the cytoplasm. The enzyme catalyses L-methionine + ATP + H2O = S-adenosyl-L-methionine + phosphate + diphosphate. It participates in amino-acid biosynthesis; S-adenosyl-L-methionine biosynthesis; S-adenosyl-L-methionine from L-methionine: step 1/1. Functionally, catalyzes the formation of S-adenosylmethionine (AdoMet) from methionine and ATP. The overall synthetic reaction is composed of two sequential steps, AdoMet formation and the subsequent tripolyphosphate hydrolysis which occurs prior to release of AdoMet from the enzyme. The chain is S-adenosylmethionine synthase from Gloeobacter violaceus (strain ATCC 29082 / PCC 7421).